Consider the following 526-residue polypeptide: Arylsulfatase G (526 aa).

An N-terminal signal peptide occupies residues 1–16 (MGWLFLKVLLVGMVFS). Positions 44, 45, and 84 each coordinate Ca(2+). The active-site Nucleophile is Cys-84. Cys-84 carries the post-translational modification 3-oxoalanine (Cys). N-linked (GlcNAc...) asparagine glycosylation occurs at Asn-117. Lys-137 lines the substrate pocket. Residue His-139 is part of the active site. Ser-162 provides a ligand contact to substrate. A glycan (N-linked (GlcNAc...) asparagine) is linked at Asn-215. His-251 serves as a coordination point for substrate. Positions 302 and 303 each coordinate Ca(2+). Asn-356 and Asn-497 each carry an N-linked (GlcNAc...) asparagine glycan.

This sequence belongs to the sulfatase family. It depends on Ca(2+) as a cofactor. Post-translationally, N-glycosylated with both high mannose and complex type sugars. In terms of processing, the conversion to 3-oxoalanine (also known as C-formylglycine, FGly), of a serine or cysteine residue in prokaryotes and of a cysteine residue in eukaryotes, is critical for catalytic activity. 63-kDa precursor undergoes proteolytic processing in two steps, yielding two fragments in the first step (apparent molecular masses of 44 and 18 kDa). In the second step, the 44-kDa fragment is processed further to the 34- and 10-kDa chains. The 10-kDa chain is a cleavage product of the 44-kDa fragment but linked to the 18-kDa chain through a disulfide bridge.

Its subcellular location is the lysosome. It carries out the reaction an aryl sulfate + H2O = a phenol + sulfate + H(+). It catalyses the reaction Hydrolysis of the 3-sulfate groups of the N-sulfo-D-glucosamine 3-O-sulfate units of heparin.. In terms of biological role, displays arylsulfatase activity at acidic pH towards the artificial substrate p-nitrocatechol sulfate. Catalyzes the hydrolysis of the 3-sulfate groups of the N-sulfo-D-glucosamine 3-O-sulfate units of heparin. This chain is Arylsulfatase G (Arsg), found in Rattus norvegicus (Rat).